The primary structure comprises 130 residues: Small ribosomal subunit protein uS8 (130 aa).

Belongs to the universal ribosomal protein uS8 family. As to quaternary structure, part of the 30S ribosomal subunit.

One of the primary rRNA binding proteins, it binds directly to 16S rRNA central domain where it helps coordinate assembly of the platform of the 30S subunit. This Pyrobaculum neutrophilum (strain DSM 2338 / JCM 9278 / NBRC 100436 / V24Sta) (Thermoproteus neutrophilus) protein is Small ribosomal subunit protein uS8.